We begin with the raw amino-acid sequence, 510 residues long: Histidine ammonia-lyase (510 aa).

A cross-link (5-imidazolinone (Ala-Gly)) is located at residues 143–145 (ASG). Serine 144 is subject to 2,3-didehydroalanine (Ser).

This sequence belongs to the PAL/histidase family. In terms of processing, contains an active site 4-methylidene-imidazol-5-one (MIO), which is formed autocatalytically by cyclization and dehydration of residues Ala-Ser-Gly.

The protein localises to the cytoplasm. The catalysed reaction is L-histidine = trans-urocanate + NH4(+). The protein operates within amino-acid degradation; L-histidine degradation into L-glutamate; N-formimidoyl-L-glutamate from L-histidine: step 1/3. The protein is Histidine ammonia-lyase of Shewanella sediminis (strain HAW-EB3).